The primary structure comprises 452 residues: Probable ECA polymerase (452 aa).

11 helical membrane-spanning segments follow: residues 6 to 26 (FSGL…LTWF), 37 to 57 (VFFS…TSVL), 63 to 83 (VGVA…CFYG), 118 to 138 (VILM…NGFL), 155 to 175 (GVAL…VYFL), 181 to 201 (AWLF…MIVG), 207 to 227 (IIIA…ISLW), 228 to 248 (MLAA…LKRY), 341 to 361 (LVVM…GLII), 378 to 398 (YKAA…IVLV), and 410 to 430 (VFFL…FWLF).

It belongs to the WzyE family. In terms of assembly, probably part of a complex composed of WzxE, WzyE and WzzE.

The protein localises to the cell inner membrane. It participates in bacterial outer membrane biogenesis; enterobacterial common antigen biosynthesis. In terms of biological role, probably involved in the polymerization of enterobacterial common antigen (ECA) trisaccharide repeat units. In Salmonella gallinarum (strain 287/91 / NCTC 13346), this protein is Probable ECA polymerase.